A 193-amino-acid chain; its full sequence is Proteasome subunit beta 1 (193 aa).

Positions 1–4 (MPGA) are cleaved as a propeptide — removed in mature form; by autocatalysis. T5 functions as the Nucleophile in the catalytic mechanism.

It belongs to the peptidase T1B family. As to quaternary structure, the 20S proteasome core is composed of 14 alpha and 14 beta subunits that assemble into four stacked heptameric rings, resulting in a barrel-shaped structure. The two inner rings, each composed of seven catalytic beta subunits, are sandwiched by two outer rings, each composed of seven alpha subunits. The catalytic chamber with the active sites is on the inside of the barrel. Has a gated structure, the ends of the cylinder being occluded by the N-termini of the alpha-subunits. Is capped at one or both ends by the proteasome regulatory ATPase, PAN.

The protein resides in the cytoplasm. It catalyses the reaction Cleavage of peptide bonds with very broad specificity.. Its activity is regulated as follows. The formation of the proteasomal ATPase PAN-20S proteasome complex, via the docking of the C-termini of PAN into the intersubunit pockets in the alpha-rings, triggers opening of the gate for substrate entry. Interconversion between the open-gate and close-gate conformations leads to a dynamic regulation of the 20S proteasome proteolysis activity. In terms of biological role, component of the proteasome core, a large protease complex with broad specificity involved in protein degradation. The sequence is that of Proteasome subunit beta 1 from Cenarchaeum symbiosum (strain A).